A 118-amino-acid polypeptide reads, in one-letter code: Late cornified envelope protein 1C (118 aa).

Residues 1-10 (MSCQQSQQQC) are compositionally biased toward low complexity. Disordered regions lie at residues 1 to 23 (MSCQ…CPPK) and 87 to 118 (CHRP…GGCC). Residues 11-23 (QPPPKCTPKCPPK) show a composition bias toward pro residues. Positions 90 to 103 (PQSSGCCSQPSGGS) are enriched in low complexity. Residues 104–118 (SCCGGGSGQHSGGCC) are compositionally biased toward gly residues.

The protein belongs to the LCE family. Interacts with CYSRT1. As to expression, skin-specific. Expression was readily detected in adult trunk skin, adult arm skin, fetal skin, penal skin, vulva, esophagus and tongue. Not expressed in the cervix, rectum, lung, colon, or placenta.

In terms of biological role, precursors of the cornified envelope of the stratum corneum. The polypeptide is Late cornified envelope protein 1C (LCE1C) (Homo sapiens (Human)).